Here is a 211-residue protein sequence, read N- to C-terminus: Small ribosomal subunit protein uS3 (211 aa).

Residues Leu38 to Lys106 enclose the KH type-2 domain.

Belongs to the universal ribosomal protein uS3 family. In terms of assembly, part of the 30S ribosomal subunit. Forms a tight complex with proteins S10 and S14.

Binds the lower part of the 30S subunit head. Binds mRNA in the 70S ribosome, positioning it for translation. This chain is Small ribosomal subunit protein uS3, found in Ehrlichia ruminantium (strain Welgevonden).